The sequence spans 976 residues: DNA-directed RNA polymerase 1, mitochondrial (976 aa).

Residues 1–42 constitute a mitochondrion transit peptide; sequence MWRNILGRASLRKVKFLSDSSSSGTHYPVNRVRGILSSVNLS. Active-site residues include D677, K752, and D909.

This sequence belongs to the phage and mitochondrial RNA polymerase family.

The protein resides in the mitochondrion. It carries out the reaction RNA(n) + a ribonucleoside 5'-triphosphate = RNA(n+1) + diphosphate. DNA-dependent RNA polymerase catalyzes the transcription of DNA into RNA using the four ribonucleoside triphosphates as substrates. This is DNA-directed RNA polymerase 1, mitochondrial (RPOT1) from Arabidopsis thaliana (Mouse-ear cress).